The sequence spans 361 residues: Replication-associated protein (361 aa).

The disordered stretch occupies residues 1-31 (MSSLPVSESEGEGSGTSVQVPSRGGQVTPGE). A CRESS-DNA virus Rep endonuclease domain is found at 35 to 138 (SLRTKHVFLT…PESSWEFGKF (104 aa)). The RCR-1 signature appears at 42–45 (FLTY). Residues glutamate 76, histidine 84, and histidine 86 each contribute to the a divalent metal cation site. The short motif at 84–86 (HLH) is the RCR-2 element. Tyrosine 124 (for DNA cleavage activity) is an active-site residue. Positions 124–127 (YCMK) match the RCR-3 motif. Positions 192–204 (SANALFPDPPQTY) are oligomerization. Residue 243–250 (GPTRTGKT) coordinates ATP. A transactivation region spans residues 266-285 (VNFLEEWNCQAQFNIIDDIP). Residues 307-317 (KYGKKKRIPNG) carry the Nuclear localization signal motif.

This sequence belongs to the geminiviridae Rep protein family. Homooligomer. Rep binds to repeated DNA motifs (iterons). Forms the O-complex, which is a Rep-DNA complex involved in the initiation of RCR. Part of the C- and V-complexes which are RepA-Rep-DNA complexes involved in the c-sense and v-sense transcription. Mg(2+) serves as cofactor. Requires Mn(2+) as cofactor.

The protein localises to the host nucleus. Functionally, essential for the replication of viral ssDNA. The closed circular ssDNA genome is first converted to a superhelical dsDNA. Rep binds a specific region at the genome origin of replication. It introduces an endonucleolytic nick within the conserved sequence 5'-TAATATTAC-3' in the intergenic region of the genome present in all geminiviruses, thereby initiating the rolling circle replication (RCR). Following cleavage, binds covalently to the 5'-phosphate of DNA as a tyrosyl ester. The cleavage gives rise to a free 3'-OH that serves as a primer for the cellular DNA polymerase. The polymerase synthesizes the (+) strand DNA by rolling circle mechanism. After one round of replication, a Rep-catalyzed nucleotidyl transfer reaction releases a circular single-stranded virus genome, thereby terminating the replication. Displays origin-specific DNA cleavage, nucleotidyl transferase, ATPase and helicase activities. Acts as an inhibitor of C-sense gene transcription. The protein is Replication-associated protein of Avena sativa (Oat).